A 245-amino-acid chain; its full sequence is Probable phosphatase YcdX (245 aa).

Zn(2+) contacts are provided by His-7, His-9, His-15, His-40, Glu-73, His-101, His-131, Asp-192, and His-194.

It belongs to the PHP family. As to quaternary structure, homotrimer. Zn(2+) serves as cofactor.

The sequence is that of Probable phosphatase YcdX from Salmonella agona (strain SL483).